A 311-amino-acid polypeptide reads, in one-letter code: Porphobilinogen deaminase (311 aa).

S-(dipyrrolylmethanemethyl)cysteine is present on C242.

This sequence belongs to the HMBS family. As to quaternary structure, monomer. It depends on dipyrromethane as a cofactor.

It carries out the reaction 4 porphobilinogen + H2O = hydroxymethylbilane + 4 NH4(+). It functions in the pathway porphyrin-containing compound metabolism; protoporphyrin-IX biosynthesis; coproporphyrinogen-III from 5-aminolevulinate: step 2/4. Its function is as follows. Tetrapolymerization of the monopyrrole PBG into the hydroxymethylbilane pre-uroporphyrinogen in several discrete steps. This chain is Porphobilinogen deaminase (hemC), found in Neisseria meningitidis serogroup B (strain ATCC BAA-335 / MC58).